The chain runs to 461 residues: tRNA modification GTPase MnmE (461 aa).

R23, E88, and R127 together coordinate (6S)-5-formyl-5,6,7,8-tetrahydrofolate. The 161-residue stretch at 223–383 (GLNTVIVGKP…LKECIKNLFF (161 aa)) folds into the TrmE-type G domain. N233 contributes to the K(+) binding site. GTP contacts are provided by residues 233-238 (NVGKSS), 252-258 (TEIPGTT), and 277-280 (DTAG). S237 is a Mg(2+) binding site. K(+) contacts are provided by T252, I254, and T257. T258 lines the Mg(2+) pocket. A (6S)-5-formyl-5,6,7,8-tetrahydrofolate-binding site is contributed by K461.

Belongs to the TRAFAC class TrmE-Era-EngA-EngB-Septin-like GTPase superfamily. TrmE GTPase family. Homodimer. Heterotetramer of two MnmE and two MnmG subunits. It depends on K(+) as a cofactor.

It is found in the cytoplasm. Functionally, exhibits a very high intrinsic GTPase hydrolysis rate. Involved in the addition of a carboxymethylaminomethyl (cmnm) group at the wobble position (U34) of certain tRNAs, forming tRNA-cmnm(5)s(2)U34. The sequence is that of tRNA modification GTPase MnmE from Clostridium botulinum (strain Langeland / NCTC 10281 / Type F).